The sequence spans 79 residues: EAMZP30-47 protein (79 aa).

Over residues 1 to 12 the composition is skewed to low complexity; sequence HAASPRGRPQQR. Positions 1–47 are disordered; that stretch reads HAASPRGRPQQRSSRHGAEGPDTTRRGSCCSSSSSCCRPSTPRHPHN. Residues 16 to 25 are compositionally biased toward basic and acidic residues; it reads HGAEGPDTTR. Residues 28–37 are compositionally biased toward low complexity; that stretch reads SCCSSSSSCC.

It is found in the membrane. It localises to the cell membrane. The protein resides in the cytoplasmic vesicle. Its subcellular location is the secretory vesicle. The protein localises to the rhoptry. The polypeptide is EAMZP30-47 protein (CMC17) (Eimeria acervulina (Coccidian parasite)).